Reading from the N-terminus, the 290-residue chain is uncharacterized protein (290 aa).

The active-site Schiff-base intermediate with substrate is K203.

Belongs to the DeoC/FbaB aldolase family.

This is an uncharacterized protein from Pasteurella multocida (strain Pm70).